Here is a 329-residue protein sequence, read N- to C-terminus: DNA-directed RNA polymerase subunit alpha (329 aa).

Residues 1-235 (MVREKVKVST…DLFIPFLHTE (235 aa)) are alpha N-terminal domain (alpha-NTD). An alpha C-terminal domain (alpha-CTD) region spans residues 269 to 329 (IALKYIFIDQ…KQILGILEKK (61 aa)).

The protein belongs to the RNA polymerase alpha chain family. In plastids the minimal PEP RNA polymerase catalytic core is composed of four subunits: alpha, beta, beta', and beta''. When a (nuclear-encoded) sigma factor is associated with the core the holoenzyme is formed, which can initiate transcription.

Its subcellular location is the plastid. The protein localises to the chloroplast. The catalysed reaction is RNA(n) + a ribonucleoside 5'-triphosphate = RNA(n+1) + diphosphate. DNA-dependent RNA polymerase catalyzes the transcription of DNA into RNA using the four ribonucleoside triphosphates as substrates. The protein is DNA-directed RNA polymerase subunit alpha of Gossypium hirsutum (Upland cotton).